Consider the following 328-residue polypeptide: 3-dehydroquinate synthase (328 aa).

Belongs to the archaeal-type DHQ synthase family.

The enzyme catalyses 2-amino-2,3,7-trideoxy-D-lyxo-hept-6-ulosonate + NAD(+) + H2O = 3-dehydroquinate + NH4(+) + NADH + H(+). Functionally, catalyzes the oxidative deamination and cyclization of 2-amino-3,7-dideoxy-D-threo-hept-6-ulosonic acid (ADH) to yield 3-dehydroquinate (DHQ), which is fed into the canonical shikimic pathway of aromatic amino acid biosynthesis. This Methanospirillum hungatei JF-1 (strain ATCC 27890 / DSM 864 / NBRC 100397 / JF-1) protein is 3-dehydroquinate synthase.